Here is a 339-residue protein sequence, read N- to C-terminus: Ketol-acid reductoisomerase (NADP(+)) (339 aa).

Positions 1-182 (MRVYYDRDAD…GGGRAGIIET (182 aa)) constitute a KARI N-terminal Rossmann domain. NADP(+)-binding positions include 24-27 (YGSQ), R48, S51, S53, and 83-86 (DELQ). The active site involves H108. NADP(+) is bound at residue G134. One can recognise a KARI C-terminal knotted domain in the interval 183–328 (TFREECETDL…AKLRDMMPWI (146 aa)). D191, E195, E227, and E231 together coordinate Mg(2+). S252 contributes to the substrate binding site.

It belongs to the ketol-acid reductoisomerase family. The cofactor is Mg(2+).

It carries out the reaction (2R)-2,3-dihydroxy-3-methylbutanoate + NADP(+) = (2S)-2-acetolactate + NADPH + H(+). The enzyme catalyses (2R,3R)-2,3-dihydroxy-3-methylpentanoate + NADP(+) = (S)-2-ethyl-2-hydroxy-3-oxobutanoate + NADPH + H(+). It functions in the pathway amino-acid biosynthesis; L-isoleucine biosynthesis; L-isoleucine from 2-oxobutanoate: step 2/4. It participates in amino-acid biosynthesis; L-valine biosynthesis; L-valine from pyruvate: step 2/4. Functionally, involved in the biosynthesis of branched-chain amino acids (BCAA). Catalyzes an alkyl-migration followed by a ketol-acid reduction of (S)-2-acetolactate (S2AL) to yield (R)-2,3-dihydroxy-isovalerate. In the isomerase reaction, S2AL is rearranged via a Mg-dependent methyl migration to produce 3-hydroxy-3-methyl-2-ketobutyrate (HMKB). In the reductase reaction, this 2-ketoacid undergoes a metal-dependent reduction by NADPH to yield (R)-2,3-dihydroxy-isovalerate. This chain is Ketol-acid reductoisomerase (NADP(+)), found in Rhodopseudomonas palustris (strain BisB18).